Reading from the N-terminus, the 501-residue chain is ATP synthase subunit alpha (501 aa).

Residue 169–176 coordinates ATP; the sequence is GDRQTGKT.

The protein belongs to the ATPase alpha/beta chains family. As to quaternary structure, F-type ATPases have 2 components, CF(1) - the catalytic core - and CF(0) - the membrane proton channel. CF(1) has five subunits: alpha(3), beta(3), gamma(1), delta(1), epsilon(1). CF(0) has three main subunits: a(1), b(2) and c(9-12). The alpha and beta chains form an alternating ring which encloses part of the gamma chain. CF(1) is attached to CF(0) by a central stalk formed by the gamma and epsilon chains, while a peripheral stalk is formed by the delta and b chains.

It is found in the cell membrane. The enzyme catalyses ATP + H2O + 4 H(+)(in) = ADP + phosphate + 5 H(+)(out). Its function is as follows. Produces ATP from ADP in the presence of a proton gradient across the membrane. The alpha chain is a regulatory subunit. In Streptococcus equi subsp. zooepidemicus (strain H70), this protein is ATP synthase subunit alpha.